Consider the following 150-residue polypeptide: Ribonuclease H (150 aa).

The RNase H type-1 domain maps to 1 to 142 (MSDSVELFTD…ADQLANRGVD (142 aa)). Mg(2+) contacts are provided by Asp-10, Glu-48, Asp-70, and Asp-134.

It belongs to the RNase H family. As to quaternary structure, monomer. It depends on Mg(2+) as a cofactor.

It is found in the cytoplasm. It carries out the reaction Endonucleolytic cleavage to 5'-phosphomonoester.. In terms of biological role, endonuclease that specifically degrades the RNA of RNA-DNA hybrids. This Pseudomonas syringae pv. syringae (strain B728a) protein is Ribonuclease H.